We begin with the raw amino-acid sequence, 440 residues long: Mitochondrial translation factor 2 (440 aa).

Residues 1-15 (MIRTSSILKNCNYRY) constitute a mitochondrion transit peptide.

The protein resides in the mitochondrion matrix. Functionally, required for the processing and/or for the stability of the CYTB and COX1 intron-containing pre-mRNAs and of the ATP6 transcript. Could be a stem-loop RNA-binding protein that plays a role in determining RNA stability. This is Mitochondrial translation factor 2 (MTF2) from Saccharomyces cerevisiae (strain ATCC 204508 / S288c) (Baker's yeast).